Here is a 212-residue protein sequence, read N- to C-terminus: MKSNKKILFIGAPGSGKGTISKILVEKYKLVHISTGDLFRKKISEDSRFAAQIQNYLSSGSYVPDEITNKLVADFIKKIPKNQGYILDGYPRTLQQLEFMIKNGINLDCVFYLKIKNETIISRLSQRLFCQKCQKSYNLLLAKPKNGLKCDLDNTDLITRNDDRPEIITHRIEKFNNSVIPIVEFFKKSGIIYYLDAEQTLEETVIEIEKWL.

An ATP-binding site is contributed by 14–19 (GSGKGT). The NMP stretch occupies residues 34 to 63 (STGDLFRKKISEDSRFAAQIQNYLSSGSYV). Residues T35, R40, 61–63 (SYV), 89–92 (GYPR), and Q96 contribute to the AMP site. Residues 126–163 (QRLFCQKCQKSYNLLLAKPKNGLKCDLDNTDLITRNDD) are LID. Residue R127 participates in ATP binding. Residues C130 and C133 each contribute to the Zn(2+) site. 136–137 (SY) contributes to the ATP binding site. C150 and D153 together coordinate Zn(2+). AMP-binding residues include R160 and R171. ATP is bound at residue Q199.

It belongs to the adenylate kinase family. In terms of assembly, monomer.

The protein localises to the cytoplasm. The enzyme catalyses AMP + ATP = 2 ADP. Its pathway is purine metabolism; AMP biosynthesis via salvage pathway; AMP from ADP: step 1/1. Catalyzes the reversible transfer of the terminal phosphate group between ATP and AMP. Plays an important role in cellular energy homeostasis and in adenine nucleotide metabolism. This is Adenylate kinase from Mesomycoplasma hyopneumoniae (strain 232) (Mycoplasma hyopneumoniae).